We begin with the raw amino-acid sequence, 476 residues long: Glutamate--tRNA ligase (476 aa).

Positions 9 to 19 match the 'HIGH' region motif; that stretch reads PSPTGKLHIGT. Residues 109–129 are compositionally biased toward basic and acidic residues; sequence REEQKSRNKPPRYDNRHRSLS. The tract at residues 109–133 is disordered; that stretch reads REEQKSRNKPPRYDNRHRSLSTEEE. The 'KMSKS' region signature appears at 248 to 252; it reads KLSKR. ATP is bound at residue lysine 251.

Belongs to the class-I aminoacyl-tRNA synthetase family. Glutamate--tRNA ligase type 1 subfamily. Monomer.

The protein localises to the cytoplasm. The enzyme catalyses tRNA(Glu) + L-glutamate + ATP = L-glutamyl-tRNA(Glu) + AMP + diphosphate. Catalyzes the attachment of glutamate to tRNA(Glu) in a two-step reaction: glutamate is first activated by ATP to form Glu-AMP and then transferred to the acceptor end of tRNA(Glu). The chain is Glutamate--tRNA ligase from Prochlorococcus marinus (strain MIT 9211).